Reading from the N-terminus, the 354-residue chain is Non-structural protein NS2 (354 aa).

Disordered stretches follow at residues 163 to 196 (NERE…DNEA) and 229 to 269 (DERD…THIT). Composition is skewed to basic and acidic residues over residues 178-196 (SREE…DNEA) and 237-249 (DERG…KTLS). Acidic residues predominate over residues 250 to 260 (DDDDQGEDASD).

Functionally, single-stranded RNA-binding protein. The chain is Non-structural protein NS2 (Segment-8) from Bluetongue virus 17 (isolate USA) (BTV 17).